The chain runs to 169 residues: Probable GPI-anchored adhesin-like protein PGA22 (169 aa).

The signal sequence occupies residues 1–18 (MKYSTLAWLVIASYTVFA). 4 N-linked (GlcNAc...) asparagine glycosylation sites follow: N87, N104, N111, and N118. Residue G140 is the site of GPI-anchor amidated glycine attachment. Positions 141 to 169 (PALTTTTVAEAFSLAAGASLGYLVALLFL) are cleaved as a propeptide — removed in mature form.

It localises to the cell membrane. Its function is as follows. Putative adhesin which may be involved in cell adhesion and virulence. In Candida albicans (strain SC5314 / ATCC MYA-2876) (Yeast), this protein is Probable GPI-anchored adhesin-like protein PGA22 (PGA22).